The chain runs to 1062 residues: Platelet-derived growth factor receptor alpha (1062 aa).

The first 27 residues, 1-27 (MFPPSSAPLLLPQLEELVVPLHTAFTL), serve as a signal peptide directing secretion. 5 consecutive Ig-like C2-type domains span residues 28 to 96 (TCQG…VYVP), 91 to 184 (IYVY…VHGW), 190 to 281 (LHVE…KQIA), 287 to 381 (SEFM…RTVS), and 389 to 493 (PAVI…IKLV). Over 28–504 (TCQGEATIAW…NGPHPELTVA (477 aa)) the chain is Extracellular. C29 and C74 form a disulfide bridge. N79 and N132 each carry an N-linked (GlcNAc...) asparagine glycan. 2 disulfides stabilise this stretch: C124–C165 and C211–C265. N-linked (GlcNAc...) asparagine glycosylation is found at N273, N333, N366, N433, and N444. C410 and C477 are disulfide-bonded. The helical transmembrane segment at 505–525 (AAVLVLLVIVIISLIVLVVIW) threads the bilayer. At 526-1062 (KQKPRYEIRW…CSDLVEDSFL (537 aa)) the chain is on the cytoplasmic side. 2 positions are modified to phosphotyrosine; by autocatalysis: Y548 and Y550. A Protein kinase domain is found at 569–945 (LVLGRILGSG…HYERVNHEFL (377 aa)). ATP is bound by residues 575–583 (LGSGAFGKV) and K603. Phosphotyrosine; by autocatalysis is present on residues Y697, Y708, Y719, Y731, and Y739. Residues 734–754 (LQGSNYDHPPSQKGSNDGEMD) form a disordered region. The active-site Proton acceptor is D793. Y824 and Y963 each carry phosphotyrosine; by autocatalysis. A compositionally biased stretch (basic and acidic residues) spans 975-986 (KDRESGFDEQRL). Residues 975-1034 (KDRESGFDEQRLSSDSGYIIPLPDLDPISDEEYGKRNRHSSQTSEESAIETGSSSSTFAK) are disordered. Y992 bears the Phosphotyrosine; by autocatalysis mark. Polar residues predominate over residues 1014–1032 (SSQTSEESAIETGSSSSTF).

This sequence belongs to the protein kinase superfamily. Tyr protein kinase family. CSF-1/PDGF receptor subfamily. Interacts with homodimeric pdgfa, pdgfb and pdgfc, and with heterodimers formed by pdgfa and pdgfb. monomer in the absence of bound ligand. Interaction with dimeric pdgfa, pdgfb and/or pdgfc leads to receptor dimerization, where both pdgfra homodimers and heterodimers with pdgfrb are observed. In terms of processing, ubiquitinated, leading to its degradation. Post-translationally, autophosphorylated on tyrosine residues upon ligand binding. Autophosphorylation occurs in trans, i.e. one subunit of the dimeric receptor phosphorylates tyrosine residues on the other subunit.

The protein resides in the cell membrane. The enzyme catalyses L-tyrosyl-[protein] + ATP = O-phospho-L-tyrosyl-[protein] + ADP + H(+). Present in an inactive conformation in the absence of bound ligand. Binding of pdgfa and/or pdgfb leads to dimerization and activation by autophosphorylation on tyrosine residues. In terms of biological role, tyrosine-protein kinase that acts as a cell-surface receptor for pdgfa, pdgfb and pdgfc and plays an essential role in the regulation of embryonic development, cell proliferation, survival and chemotaxis. Depending on the context, promotes or inhibits cell proliferation and cell migration. Plays an important role in the differentiation of bone marrow-derived mesenchymal stem cells. Required for normal skeleton development. Required for normal development of the gastrointestinal tract. Plays a role in cell migration and chemotaxis in wound healing. Plays a role in platelet activation, secretion of agonists from platelet granules, and in thrombin-induced platelet aggregation. Binding of its cognate ligands - homodimeric pdgfa, homodimeric pdgfb, heterodimers formed by pdgfa and pdgfb or homodimeric pdgfc -leads to the activation of several signaling cascades; the response depends on the nature of the bound ligand and is modulated by the formation of heterodimers between pdgfra and pdgfrb. Phosphorylates pik3r1, plcg1, and ptpn11. Activation of plcg1 leads to the production of the cellular signaling molecules diacylglycerol and inositol 1,4,5-trisphosphate, mobilization of cytosolic Ca(2+) and the activation of protein kinase C. Phosphorylates pik3r1, the regulatory subunit of phosphatidylinositol 3-kinase, and thereby mediates activation of the AKT1 signaling pathway. Mediates activation of hras and of the MAP kinases mapk1/erk2 and/or mapk3/erk1. Promotes activation of STAT family members stat1, stat3 and stat5a and/or stat5b. Receptor signaling is down-regulated by protein phosphatases that dephosphorylate the receptor and its down-stream effectors, and by rapid internalization of the activated receptor. The chain is Platelet-derived growth factor receptor alpha (pdgfra) from Takifugu rubripes (Japanese pufferfish).